The chain runs to 188 residues: Acireductone dioxygenase (188 aa).

The Fe(2+) site is built by His97, His99, Glu103, and His141. His97, His99, Glu103, and His141 together coordinate Ni(2+).

It belongs to the acireductone dioxygenase (ARD) family. As to quaternary structure, monomer. The cofactor is Fe(2+). Ni(2+) serves as cofactor.

It carries out the reaction 1,2-dihydroxy-5-(methylsulfanyl)pent-1-en-3-one + O2 = 3-(methylsulfanyl)propanoate + CO + formate + 2 H(+). The catalysed reaction is 1,2-dihydroxy-5-(methylsulfanyl)pent-1-en-3-one + O2 = 4-methylsulfanyl-2-oxobutanoate + formate + 2 H(+). It functions in the pathway amino-acid biosynthesis; L-methionine biosynthesis via salvage pathway; L-methionine from S-methyl-5-thio-alpha-D-ribose 1-phosphate: step 5/6. Its function is as follows. Catalyzes 2 different reactions between oxygen and the acireductone 1,2-dihydroxy-3-keto-5-methylthiopentene (DHK-MTPene) depending upon the metal bound in the active site. Fe-containing acireductone dioxygenase (Fe-ARD) produces formate and 2-keto-4-methylthiobutyrate (KMTB), the alpha-ketoacid precursor of methionine in the methionine recycle pathway. Ni-containing acireductone dioxygenase (Ni-ARD) produces methylthiopropionate, carbon monoxide and formate, and does not lie on the methionine recycle pathway. This chain is Acireductone dioxygenase, found in Xanthomonas oryzae pv. oryzae (strain MAFF 311018).